The chain runs to 289 residues: 4-hydroxy-tetrahydrodipicolinate synthase (289 aa).

T45 is a pyruvate binding site. Catalysis depends on Y133, which acts as the Proton donor/acceptor. K161 functions as the Schiff-base intermediate with substrate in the catalytic mechanism. Pyruvate is bound at residue I200.

This sequence belongs to the DapA family. As to quaternary structure, homotetramer; dimer of dimers.

It localises to the cytoplasm. The enzyme catalyses L-aspartate 4-semialdehyde + pyruvate = (2S,4S)-4-hydroxy-2,3,4,5-tetrahydrodipicolinate + H2O + H(+). Its pathway is amino-acid biosynthesis; L-lysine biosynthesis via DAP pathway; (S)-tetrahydrodipicolinate from L-aspartate: step 3/4. Its function is as follows. Catalyzes the condensation of (S)-aspartate-beta-semialdehyde [(S)-ASA] and pyruvate to 4-hydroxy-tetrahydrodipicolinate (HTPA). In Coxiella burnetii (strain Dugway 5J108-111), this protein is 4-hydroxy-tetrahydrodipicolinate synthase.